A 114-amino-acid polypeptide reads, in one-letter code: Anti-sigma-B factor antagonist (114 aa).

An STAS domain is found at 4 to 114; the sequence is SIEIKERDTD…VEGEMNGNNA (111 aa). Ser-58 bears the Phosphoserine mark.

It belongs to the anti-sigma-factor antagonist family. Phosphorylated by RsbW on a serine residue.

Functionally, positive regulator of sigma-B activity. Non-phosphorylated RsbV binds to RsbW, preventing its association with sigma-B. When phosphorylated, releases RsbW, which is then free to complex with and inactivate sigma-B. This chain is Anti-sigma-B factor antagonist (rsbV), found in Listeria innocua serovar 6a (strain ATCC BAA-680 / CLIP 11262).